Reading from the N-terminus, the 415-residue chain is Tyrosine--tRNA ligase (415 aa).

Tyr34 is an L-tyrosine binding site. A 'HIGH' region motif is present at residues 39–48 (PTADSLHLGH). 2 residues coordinate L-tyrosine: Tyr164 and Gln168. Positions 226 to 230 (KFGKS) match the 'KMSKS' region motif. An ATP-binding site is contributed by Lys229. The region spanning 348–415 (KNVVDFLVDG…KKKYFLGKVK (68 aa)) is the S4 RNA-binding domain.

Belongs to the class-I aminoacyl-tRNA synthetase family. TyrS type 1 subfamily. As to quaternary structure, homodimer.

It localises to the cytoplasm. The enzyme catalyses tRNA(Tyr) + L-tyrosine + ATP = L-tyrosyl-tRNA(Tyr) + AMP + diphosphate + H(+). Functionally, catalyzes the attachment of tyrosine to tRNA(Tyr) in a two-step reaction: tyrosine is first activated by ATP to form Tyr-AMP and then transferred to the acceptor end of tRNA(Tyr). This is Tyrosine--tRNA ligase from Leuconostoc mesenteroides subsp. mesenteroides (strain ATCC 8293 / DSM 20343 / BCRC 11652 / CCM 1803 / JCM 6124 / NCDO 523 / NBRC 100496 / NCIMB 8023 / NCTC 12954 / NRRL B-1118 / 37Y).